Reading from the N-terminus, the 612-residue chain is UBA domain-containing protein 6 (612 aa).

Positions 3–42 (DLDTKIKTLKNMGVSESDAKDSLERCGYDVESAAEFIFSG) constitute a UBA domain. S595 carries the phosphoserine modification.

Its subcellular location is the cytoplasm. The protein localises to the nucleus. In Schizosaccharomyces pombe (strain 972 / ATCC 24843) (Fission yeast), this protein is UBA domain-containing protein 6 (ucp6).